The primary structure comprises 197 residues: Ribonuclease HII (197 aa).

One can recognise an RNase H type-2 domain in the interval 11–197; sequence GRIAGVDEVG…FGPVKRVLGL (187 aa). Positions 17, 18, and 109 each coordinate a divalent metal cation.

This sequence belongs to the RNase HII family. The cofactor is Mn(2+). Mg(2+) is required as a cofactor.

Its subcellular location is the cytoplasm. The enzyme catalyses Endonucleolytic cleavage to 5'-phosphomonoester.. Endonuclease that specifically degrades the RNA of RNA-DNA hybrids. The sequence is that of Ribonuclease HII from Edwardsiella ictaluri (strain 93-146).